A 222-amino-acid chain; its full sequence is uncharacterized protein (222 aa).

2 helical membrane-spanning segments follow: residues 22–42 and 189–209; these read IRVI…FLYI and AICL…FCLV.

Its subcellular location is the cell membrane. This is an uncharacterized protein from Escherichia coli (strain K12).